Consider the following 157-residue polypeptide: MNDVVKIVEDFIRPHIPQPFELFAVEWEKFGGDMMLSILVDKEGGIEIDETAELSEIISPLLDTISPDPFPTEGYLLEVASPGAERPLRKAEHFAGAVGEYIFVKLYQKINNEKEITGDLVSFDGETLVVDVLDKTRHKNIEIPLSAVAKAQTMVKF.

The protein belongs to the RimP family.

Its subcellular location is the cytoplasm. Functionally, required for maturation of 30S ribosomal subunits. The chain is Ribosome maturation factor RimP from Lactococcus lactis subsp. lactis (strain IL1403) (Streptococcus lactis).